We begin with the raw amino-acid sequence, 1337 residues long: MEENEVESSSDAAPRPGQPEEPSESGLGVCTSEAVSADSSDAATVPGLTEADDSGVGQSSDGGNHSVEEVSESISTDPLPHGCLPDSSSVSRGPVAEMPGGPPALVHSSVLPDPSMLVSDCTASSSDLGSAIDKIIESTIGPDLIQSCITVTSGEEGGAETTQYLILQGPDDGAPMASSMSTSTLANSLAAIEALADGPTSTSACLEPPEEPQGDPSSVAQQPPAPVTEELDLQSLEAMMEVVVVQQFKCKMCQYRSSTKATLLRHMRERHFRPALAAAAAATGKRGRVRKWGTSTKTTEEDRPEEEEEDDDIVDAGAIDDLEEDSDYNPAEDEPRGRQLRLQRPTPSTPRPRRRPGRPRKLPRLETSDLHDGVGQPLVSSQSTQSPPELQDLEAPSSSGLRALGKVGRGLVESGVSQSDAENAAPSCQDEADAPPRRRGRPSRRFLGKKYRKYYYKSPKPLLRPYLCRICGSRFLSHEDLRFHVNSHEAGDPQLFRCLQCSYRSRRWSSLKEHMFNHVGSKPYKCDECSYTSVYRKDVIRHAAVHSQDRKKRPDPTPKLSSFPCPVCGRVYPMQKRLTQHMKTHSTEKPHMCDKCGKSFKKRYTFKMHLLTHIQAVANRRFKCEFCEFVCEDKKALLNHQLSHVSDKPFKCSFCPYRTFREDFLLSHVAVKHTGAKPFACEYCHFSTRHKKNLRLHVRCRHANSFEEWGRRHPEEPPSRRRPFFSLQQIEELKQQHSTAPGPPLSSPGPEAPQEPAPFQSPETPPLLCPDALGGTTIIYQQGAEESTAVATQTALDLLLNMSAQRELGATALQVAVVKSEGIEAELTSTGGQPSPEDTTPRVVTLHMAESGSSVAAESQLGPSDLQQIALPSGPFGGASYSVITAPPVEGRTSASGPPYREEPPGEAAQAVVVSDTLKEAGTHYIMAADGTQLHHIELTADGSISFPSPDTLAPGTKWPLLQCGGPPRDGSEVLSPTKTHHMGGSQGSSTPPPAASHTLGLVVPQSPPSAAASSTKKFSCKVCSEAFPSRAEMESHKRAHAGPAAFKCPDCPFSARQWPEVRAHMAQHSSLRPHQCNQCSFASKNKKDLRRHMLTHTNEKPFSCHVCGQRFNRNGHLKFHIQRLHSIDGRKTGTSTARAPAQTIILNSEEETLATLHTAFQSSHGVLGTERLQQALSQEHIIVAQEQTVTNQEEATYIQEITADGQTVQHLVTSDNQVQYIISQDGVQHLLPQEYVVVPDGHHIQVQEGQITHIQYEQGTPFLQESQIQYVPVSPSQQLVTQAQLEAAAHSAVTAVADAAMAQAQGLFGTEEAVPEQIHQLQHQGIEYDVITLSDD.

Disordered regions lie at residues 1 to 108 (MEEN…LVHS) and 198 to 226 (GPTSTSACLEPPEEPQGDPSSVAQQPPAP). 2 stretches are compositionally biased toward low complexity: residues 31–45 (TSEAVSADSSDAATV) and 54–63 (SGVGQSSDGG). The C2H2-type 1 zinc finger occupies 248 to 271 (FKCKMCQYRSSTKATLLRHMRERH). The tract at residues 278–444 (AAAAATGKRG…PPRRRGRPSR (167 aa)) is disordered. Residues 302–332 (DRPEEEEEDDDIVDAGAIDDLEEDSDYNPAE) show a composition bias toward acidic residues. The span at 351–362 (RPRRRPGRPRKL) shows a compositional bias: basic residues. A compositionally biased stretch (basic and acidic residues) spans 363–372 (PRLETSDLHD). Over residues 378-388 (LVSSQSTQSPP) the composition is skewed to polar residues. 8 consecutive C2H2-type zinc fingers follow at residues 466–488 (YLCRICGSRFLSHEDLRFHVNSH), 496–518 (FRCLQCSYRSRRWSSLKEHMFNH), 524–546 (YKCDECSYTSVYRKDVIRHAAVH), 563–585 (FPCPVCGRVYPMQKRLTQHMKTH), 591–613 (HMCDKCGKSFKKRYTFKMHLLTH), 622–644 (FKCEFCEFVCEDKKALLNHQLSH), 650–673 (FKCSFCPYRTFREDFLLSHVAVKH), and 679–702 (FACEYCHFSTRHKKNLRLHVRCRH). Disordered regions lie at residues 733-767 (LKQQHSTAPGPPLSSPGPEAPQEPAPFQSPETPPL) and 963-999 (QCGGPPRDGSEVLSPTKTHHMGGSQGSSTPPPAASHT). Residues 741-756 (PGPPLSSPGPEAPQEP) are compositionally biased toward pro residues. A phosphoserine mark is found at Ser976 and Ser1007. 4 C2H2-type zinc fingers span residues 1019–1041 (FSCKVCSEAFPSRAEMESHKRAH), 1047–1069 (FKCPDCPFSARQWPEVRAHMAQH), 1075–1097 (HQCNQCSFASKNKKDLRRHMLTH), and 1103–1126 (FSCHVCGQRFNRNGHLKFHIQRLH). Lys1022 is covalently cross-linked (Glycyl lysine isopeptide (Lys-Gly) (interchain with G-Cter in SUMO2)). Position 1149 is a phosphoserine (Ser1149).

Belongs to the krueppel C2H2-type zinc-finger protein family. As to quaternary structure, interacts with NCOA6; may enhance ligand-dependent transcriptional activation by nuclear hormone receptors. Interacts with CNOT6. Interacts with CNOT9; the interaction is direct. Component of a nuclear receptor-mediated transcription complex composed of at least ZNF335, CCAR2 and EMSY; the complex stimulates the transcription of nuclear receptor target genes such as SOX9 and HOXA1. Within the complex interacts with EMSY and interacts (via C-terminus) with CCAR2. Interacts with members of histone H3'Lys4'(H3K4) methyltransferase complexes ASH2L, CXXC1, KMT2A/MLL1, RBBP5, SETD1A and WDR5. Component of a histone methylation complex composed of at least ZNF335, RBBP5, ASH2L and WDR5; the complex may have histone H3-specific methyltransferase activity, however does not have specificity for 'Lys-4' of histone H3. Interacts with RBBP5 and WDR5. Interacts with ASHL2. Components of this complex may associate with components of the ZNF335-CCAR2-EMSY nuclear receptor-mediated transcription complex to form a complex at least composed of ZNF335, HCFC1, CCAR2, EMSY, MKI67, RBBP5, ASH2L and WDR5. Within this complex also interacts with HCFC1 and MKI67. Expressed at low levels in cerebral cortex, hippocampus and cerebellum (at protein level).

Its subcellular location is the nucleus. Component or associated component of some histone methyltransferase complexes may regulate transcription through recruitment of those complexes on gene promoters. Enhances ligand-dependent transcriptional activation by nuclear hormone receptors. Plays an important role in neural progenitor cell proliferation and self-renewal through the regulation of specific genes involved brain development, including REST. Also controls the expression of genes involved in somatic development and regulates, for instance, lymphoblast proliferation. The chain is Zinc finger protein 335 (Znf335) from Mus musculus (Mouse).